Here is a 254-residue protein sequence, read N- to C-terminus: Alcohol dehydrogenase (254 aa).

Residue 10-33 (FVAGLGGIGLDTSREIVKSGPKNL) coordinates NAD(+). Residue serine 138 coordinates substrate. Residue tyrosine 151 is the Proton acceptor of the active site.

It belongs to the short-chain dehydrogenases/reductases (SDR) family. Homodimer.

The catalysed reaction is a primary alcohol + NAD(+) = an aldehyde + NADH + H(+). The enzyme catalyses a secondary alcohol + NAD(+) = a ketone + NADH + H(+). The sequence is that of Alcohol dehydrogenase (Adh) from Drosophila planitibia (Fruit fly).